The following is a 218-amino-acid chain: MRIILLGAPGAGKGTQAQNIMKKFGIPQISTGDMLRAAVKAGSPLGLKVKEVMATGGLVSDETIIALVKDRIKEDDCANGFLFDGFPRTIPQAEALREAGVKIDHVVEIAVDDQEIIKRLSGRRVHEASGRVYHVDYNPPKVEGKDDVTGEPLVQREDDKEETVRKRLEVYHSQTAPLVDYYRSWAEKDADAAPEYLRVEGVGSVDEIRDRVFTGLQK.

Residue 10–15 (GAGKGT) participates in ATP binding. Residues 30–59 (STGDMLRAAVKAGSPLGLKVKEVMATGGLV) form an NMP region. Residues T31, R36, 57–59 (GLV), 85–88 (GFPR), and Q92 each bind AMP. An LID region spans residues 122-159 (GRRVHEASGRVYHVDYNPPKVEGKDDVTGEPLVQREDD). ATP-binding positions include R123 and 132 to 133 (VY). AMP is bound by residues R156 and R167. An ATP-binding site is contributed by G203.

The protein belongs to the adenylate kinase family. Monomer.

The protein localises to the cytoplasm. The catalysed reaction is AMP + ATP = 2 ADP. It functions in the pathway purine metabolism; AMP biosynthesis via salvage pathway; AMP from ADP: step 1/1. Catalyzes the reversible transfer of the terminal phosphate group between ATP and AMP. Plays an important role in cellular energy homeostasis and in adenine nucleotide metabolism. The sequence is that of Adenylate kinase from Hahella chejuensis (strain KCTC 2396).